The following is a 181-amino-acid chain: Peptide deformylase (181 aa).

Fe cation contacts are provided by Cys103 and His145. The active site involves Glu146. His149 contacts Fe cation.

It belongs to the polypeptide deformylase family. It depends on Fe(2+) as a cofactor.

The catalysed reaction is N-terminal N-formyl-L-methionyl-[peptide] + H2O = N-terminal L-methionyl-[peptide] + formate. Functionally, removes the formyl group from the N-terminal Met of newly synthesized proteins. Requires at least a dipeptide for an efficient rate of reaction. N-terminal L-methionine is a prerequisite for activity but the enzyme has broad specificity at other positions. This chain is Peptide deformylase, found in Orientia tsutsugamushi (strain Ikeda) (Rickettsia tsutsugamushi).